The chain runs to 292 residues: 4-hydroxybenzoate octaprenyltransferase (292 aa).

The next 8 membrane-spanning stretches (helical) occupy residues 20-40 (IGIL…ADGM), 43-63 (PMIL…GCAI), 94-114 (LLIA…LNLL), 135-155 (FFAM…PMAF), 160-180 (GTVP…VIAY), 209-229 (VAGI…AGIL), 234-254 (IWFY…YGMI), and 266-286 (FLHN…DTLF).

The protein belongs to the UbiA prenyltransferase family. Mg(2+) is required as a cofactor.

The protein localises to the cell inner membrane. The catalysed reaction is all-trans-octaprenyl diphosphate + 4-hydroxybenzoate = 4-hydroxy-3-(all-trans-octaprenyl)benzoate + diphosphate. Its pathway is cofactor biosynthesis; ubiquinone biosynthesis. Functionally, catalyzes the prenylation of para-hydroxybenzoate (PHB) with an all-trans polyprenyl group. Mediates the second step in the final reaction sequence of ubiquinone-8 (UQ-8) biosynthesis, which is the condensation of the polyisoprenoid side chain with PHB, generating the first membrane-bound Q intermediate 3-octaprenyl-4-hydroxybenzoate. The polypeptide is 4-hydroxybenzoate octaprenyltransferase (Nitrosomonas europaea (strain ATCC 19718 / CIP 103999 / KCTC 2705 / NBRC 14298)).